The chain runs to 390 residues: MDGKFGKYGGIFVPELLIPALEELEAAFLHYSKDRRFNEDLEHYLREYAGRPTGLYHARNLSEKLGCRVYLKREDMLHTGAHKINNTIGQALLAGYMGKRRLIAETGAGQHGIATAAAGALFGMDVDVYMGTEDVERQKLNVFRMEISGARVIPVDSGSRTLKDAINQAMRDWISSVEDTHYLIGSTMGPHPYPTMVKHFQSVIGREAREQILEIEGELPDTIIACVGGGSNAIGIFSAFLDDDVELIGAEGGGEGIESGNHGATLSAGSEGVLHGSLSYVLQDDDGQINEAHSVSAGLDYPGVGPEHAYLMETGRAMYEPITDAEALRGFKLLSRCEGIMPALESAHAIACLEKYASKPENRGKTVIVNLSGRGDKDMFLAAGLLGVDL.

At Lys83 the chain carries N6-(pyridoxal phosphate)lysine.

It belongs to the TrpB family. Tetramer of two alpha and two beta chains. The cofactor is pyridoxal 5'-phosphate.

The enzyme catalyses (1S,2R)-1-C-(indol-3-yl)glycerol 3-phosphate + L-serine = D-glyceraldehyde 3-phosphate + L-tryptophan + H2O. The protein operates within amino-acid biosynthesis; L-tryptophan biosynthesis; L-tryptophan from chorismate: step 5/5. Its function is as follows. The beta subunit is responsible for the synthesis of L-tryptophan from indole and L-serine. This is Tryptophan synthase beta chain 2 (trpB2) from Methanothermobacter marburgensis (strain ATCC BAA-927 / DSM 2133 / JCM 14651 / NBRC 100331 / OCM 82 / Marburg) (Methanobacterium thermoautotrophicum).